The chain runs to 219 residues: Adenylate kinase (219 aa).

Residue 10–15 coordinates ATP; sequence GAGKGT. Residues 30 to 59 form an NMP region; it reads STGDMLRVAVKVGTPLGIEAKKIMDSGGLV. AMP is bound by residues T31, R36, 57–59, 85–88, and Q92; these read GLV and GFPR. Positions 122–159 are LID; it reads GRRTHLKSGRTYHITYNQPKVEGIDDITGEKLVQRSDD. ATP contacts are provided by residues R123 and 132–133; that span reads TY. Residues R156 and R167 each contribute to the AMP site. G202 contributes to the ATP binding site.

It belongs to the adenylate kinase family. In terms of assembly, monomer.

The protein resides in the cytoplasm. It carries out the reaction AMP + ATP = 2 ADP. It functions in the pathway purine metabolism; AMP biosynthesis via salvage pathway; AMP from ADP: step 1/1. Catalyzes the reversible transfer of the terminal phosphate group between ATP and AMP. Plays an important role in cellular energy homeostasis and in adenine nucleotide metabolism. In Vesicomyosocius okutanii subsp. Calyptogena okutanii (strain HA), this protein is Adenylate kinase.